The sequence spans 677 residues: Methionine--tRNA ligase (677 aa).

Positions 15–25 match the 'HIGH' region motif; that stretch reads PYANGSIHLGH. The Zn(2+) site is built by Cys-146, Cys-149, Cys-159, and Cys-162. The short motif at 333-337 is the 'KMSKS' region element; the sequence is KMSKS. Lys-336 contacts ATP. The tRNA-binding domain occupies 575–677; it reads DFAKIDLRVA…DGAKPGQQVK (103 aa).

This sequence belongs to the class-I aminoacyl-tRNA synthetase family. MetG type 1 subfamily. In terms of assembly, homodimer. It depends on Zn(2+) as a cofactor.

The protein resides in the cytoplasm. It catalyses the reaction tRNA(Met) + L-methionine + ATP = L-methionyl-tRNA(Met) + AMP + diphosphate. In terms of biological role, is required not only for elongation of protein synthesis but also for the initiation of all mRNA translation through initiator tRNA(fMet) aminoacylation. This Salmonella agona (strain SL483) protein is Methionine--tRNA ligase.